Consider the following 172-residue polypeptide: Nicotinamide-nucleotide adenylyltransferase (172 aa).

It belongs to the archaeal NMN adenylyltransferase family.

Its subcellular location is the cytoplasm. It carries out the reaction beta-nicotinamide D-ribonucleotide + ATP + H(+) = diphosphate + NAD(+). It participates in cofactor biosynthesis; NAD(+) biosynthesis; NAD(+) from nicotinamide D-ribonucleotide: step 1/1. The sequence is that of Nicotinamide-nucleotide adenylyltransferase from Saccharolobus solfataricus (strain ATCC 35092 / DSM 1617 / JCM 11322 / P2) (Sulfolobus solfataricus).